Here is a 215-residue protein sequence, read N- to C-terminus: Cytochrome b6 (215 aa).

The helical transmembrane segment at 32–52 (IFYCLGGITLTCFLVQVATGF) threads the bilayer. Heme c is bound at residue C35. The heme b site is built by H86 and H100. Transmembrane regions (helical) follow at residues 90–110 (ASMM…TGGF), 116–136 (LTWV…VTGY), and 186–206 (LHTF…FSMI). Heme b-binding residues include H187 and H202.

This sequence belongs to the cytochrome b family. PetB subfamily. The 4 large subunits of the cytochrome b6-f complex are cytochrome b6, subunit IV (17 kDa polypeptide, PetD), cytochrome f and the Rieske protein, while the 4 small subunits are PetG, PetL, PetM and PetN. The complex functions as a dimer. Heme b serves as cofactor. It depends on heme c as a cofactor.

Its subcellular location is the plastid. It localises to the chloroplast thylakoid membrane. Its function is as follows. Component of the cytochrome b6-f complex, which mediates electron transfer between photosystem II (PSII) and photosystem I (PSI), cyclic electron flow around PSI, and state transitions. This is Cytochrome b6 from Piper cenocladum (Ant piper).